The sequence spans 262 residues: 5'-nucleotidase SurE (262 aa).

Residues aspartate 8, aspartate 9, serine 40, and asparagine 92 each coordinate a divalent metal cation.

Belongs to the SurE nucleotidase family. A divalent metal cation serves as cofactor.

It is found in the cytoplasm. It carries out the reaction a ribonucleoside 5'-phosphate + H2O = a ribonucleoside + phosphate. Its function is as follows. Nucleotidase that shows phosphatase activity on nucleoside 5'-monophosphates. The polypeptide is 5'-nucleotidase SurE (Xylella fastidiosa (strain M23)).